We begin with the raw amino-acid sequence, 104 residues long: L-rhamnose mutarotase (104 aa).

Residue Tyr18 coordinates substrate. His22 serves as the catalytic Proton donor. Residues Tyr41 and 76-77 (WW) contribute to the substrate site.

Belongs to the rhamnose mutarotase family. Homodimer.

The protein localises to the cytoplasm. The enzyme catalyses alpha-L-rhamnose = beta-L-rhamnose. It participates in carbohydrate metabolism; L-rhamnose metabolism. Involved in the anomeric conversion of L-rhamnose. The protein is L-rhamnose mutarotase of Pectobacterium carotovorum subsp. carotovorum (strain PC1).